Reading from the N-terminus, the 314-residue chain is Secreted frizzled-related protein 5 (314 aa).

The first 21 residues, 1–21 (MWVAWSARTAALALLLGALHG), serve as a signal peptide directing secretion. The FZ domain maps to 45–162 (SKPPQCLDIP…PLDNDLCIAV (118 aa)). Disulfide bonds link Cys50–Cys113, Cys60–Cys106, Cys97–Cys132, Cys121–Cys159, Cys125–Cys149, Cys178–Cys250, Cys181–Cys252, and Cys195–Cys300. Residues 178 to 300 (CAQCEMEHSA…AVKFMFSYPC (123 aa)) form the NTR domain.

This sequence belongs to the secreted frizzled-related protein (sFRP) family.

Its subcellular location is the secreted. Functionally, soluble frizzled-related proteins (sFRPS) function as modulators of Wnt signaling through direct interaction with Wnts. They have a role in regulating cell growth and differentiation in specific cell types. SFRP5 may be involved in determining the polarity of photoreceptor, and perhaps, other cells in the retina. The protein is Secreted frizzled-related protein 5 (Sfrp5) of Mus musculus (Mouse).